The sequence spans 141 residues: Hemoglobin subunit alpha-D (141 aa).

The Globin domain maps to 1–141 (MLTADDKKLI…VASVLAEKYR (141 aa)). Residues H58 and H87 each coordinate heme b.

Belongs to the globin family. Heterotetramer of two alpha-D chains and two beta chains. In terms of tissue distribution, red blood cells.

In terms of biological role, involved in oxygen transport from the lung to the various peripheral tissues. The chain is Hemoglobin subunit alpha-D (HBAD) from Rhea americana (Greater rhea).